The sequence spans 32 residues: Kappa-theraphotoxin-Gr2b (32 aa).

Cystine bridges form between cysteine 2-cysteine 16, cysteine 9-cysteine 21, and cysteine 15-cysteine 25.

Belongs to the neurotoxin 30 (phrixotoxin) family. Expressed by the venom gland.

It localises to the secreted. In terms of biological role, binds the voltage-sensor domain of the potassium channel KvAP (from the archaeon Aeropyrum pernix) and affects channel gating. The chain is Kappa-theraphotoxin-Gr2b from Grammostola rosea (Chilean rose tarantula).